A 155-amino-acid chain; its full sequence is MNIKIVCFGKLDKKFFIDSFNEYANRISKYANLQVIELKEEYQKEDVVNKNINSDLLIDKLKAFSDHEIICMDVSSKNYSTEEFMSIIENNKNLKQAKIVFVIGPSDGFSDKFLQQNYKKVSFGNITLPHQLFRIILAEQIYRAFKIMNNEKYHK.

S-adenosyl-L-methionine is bound by residues Gly104 and Phe123–Leu128.

Belongs to the RNA methyltransferase RlmH family. In terms of assembly, homodimer.

It localises to the cytoplasm. It carries out the reaction pseudouridine(1915) in 23S rRNA + S-adenosyl-L-methionine = N(3)-methylpseudouridine(1915) in 23S rRNA + S-adenosyl-L-homocysteine + H(+). Functionally, specifically methylates the pseudouridine at position 1915 (m3Psi1915) in 23S rRNA. The protein is Ribosomal RNA large subunit methyltransferase H of Mesoplasma florum (strain ATCC 33453 / NBRC 100688 / NCTC 11704 / L1) (Acholeplasma florum).